The sequence spans 324 residues: Proto-oncogene Mas (324 aa).

Residues 1 to 35 (MDQSNMTSLAEEKAMNTSSRNASLGSSHPPIPIVH) lie on the Extracellular side of the membrane. N-linked (GlcNAc...) asparagine glycosylation is found at Asn-5, Asn-16, and Asn-21. Residues 36–60 (WVIMSISPLGFVENGILLWFLCFRM) form a helical membrane-spanning segment. The Cytoplasmic portion of the chain corresponds to 61–64 (RRNP). The helical transmembrane segment at 65–86 (FTVYITHLSIADISLLFCIFIL) threads the bilayer. Residues 87-103 (SIDYALDYELSSGHHYT) lie on the Extracellular side of the membrane. A helical membrane pass occupies residues 104-127 (IVTLSVTFLFGYNTGLYLLTAISV). Residues 128–148 (ERCLSVLYPIWYRCHRPKHQS) lie on the Cytoplasmic side of the membrane. The helical transmembrane segment at 149–171 (AFVCALLWALSCLVTTMEYVMCI) threads the bilayer. The Extracellular segment spans residues 172-184 (DSGEESHSRSDCR). The chain crosses the membrane as a helical span at residues 185 to 205 (AVIIFIAILSFLVFTPLMLVS). The Cytoplasmic segment spans residues 206 to 223 (STILVVKIRKNTWASHSS). The helical transmembrane segment at 224–244 (KLYIVIMVTIIIFLIFAMPMR) threads the bilayer. At 245-262 (VLYLLYYEYWSAFGNLHN) the chain is on the extracellular side. A helical membrane pass occupies residues 263–283 (ISLLFSTINSSANPFIYFFVG). At 284-324 (SSKKKRFRESLKVVLTRAFKDEMQPRRQEGNGNTVSIETVV) the chain is on the cytoplasmic side.

Belongs to the G-protein coupled receptor 1 family. In terms of assembly, interacts with AGTR1. Interacts with FLNA (via filamin repeat 21); increases PKA-mediated phosphorylation of FLNA.

The protein resides in the cell membrane. Its function is as follows. Acts specifically as a functional antagonist of AGTR1 (angiotensin-2 type 1 receptor), although it up-regulates AGTR1 receptor levels. Positive regulation of AGTR1 levels occurs through activation of the G-proteins GNA11 and GNAQ, and stimulation of the protein kinase C signaling cascade. The antagonist effect on AGTR1 function is probably due to AGTR1 being physically altered by MAS1. Receptor for angiotensin 1-7. This Mus musculus (Mouse) protein is Proto-oncogene Mas (Mas1).